A 765-amino-acid chain; its full sequence is Cullin-5 (765 aa).

Positions 696–757 constitute a Cullin neddylation domain; sequence RELRVQEGIV…NKYMERRADD (62 aa). K709 is covalently cross-linked (Glycyl lysine isopeptide (Lys-Gly) (interchain with G-Cter in NEDD8)).

This sequence belongs to the cullin family. In terms of assembly, interacts with rbx-1 and rbx-2. Post-translationally, neddylated; which enhances the ubiquitination activity of SCF-like complex.

It functions in the pathway protein modification; protein ubiquitination. Functionally, probable core component of cullin-based SCF-like E3 ubiquitin-protein ligase complexes which mediate the ubiquitination and subsequent proteasomal degradation of target proteins. In association with rbx-2 seems to be involved in meiotic cell cycle progression in the germline. Required for phosphorylation of the MAP kinase MPK-1 in the germline. In Caenorhabditis elegans, this protein is Cullin-5 (cul-5).